The following is a 295-amino-acid chain: uncharacterized protein (295 aa).

Positions 1 to 19 (MHKLLLIITVFFTFNVAQA) are cleaved as a signal peptide.

This is an uncharacterized protein from Rickettsia prowazekii (strain Madrid E).